We begin with the raw amino-acid sequence, 495 residues long: UDP-N-acetylmuramoyl-L-alanyl-D-glutamate--2,6-diaminopimelate ligase (495 aa).

UDP-N-acetyl-alpha-D-muramoyl-L-alanyl-D-glutamate is bound by residues L27, S29, and 44–46 (HQA). Position 116–122 (116–122 (GTNGKTT)) interacts with ATP. UDP-N-acetyl-alpha-D-muramoyl-L-alanyl-D-glutamate contacts are provided by residues N157, 158–159 (TT), S185, Q191, and R193. K225 carries the post-translational modification N6-carboxylysine. Residues R390, 414–417 (DNPR), G465, and E469 contribute to the meso-2,6-diaminopimelate site. Residues 414–417 (DNPR) carry the Meso-diaminopimelate recognition motif motif.

This sequence belongs to the MurCDEF family. MurE subfamily. Mg(2+) is required as a cofactor. In terms of processing, carboxylation is probably crucial for Mg(2+) binding and, consequently, for the gamma-phosphate positioning of ATP.

Its subcellular location is the cytoplasm. The enzyme catalyses UDP-N-acetyl-alpha-D-muramoyl-L-alanyl-D-glutamate + meso-2,6-diaminopimelate + ATP = UDP-N-acetyl-alpha-D-muramoyl-L-alanyl-gamma-D-glutamyl-meso-2,6-diaminopimelate + ADP + phosphate + H(+). Its pathway is cell wall biogenesis; peptidoglycan biosynthesis. Catalyzes the addition of meso-diaminopimelic acid to the nucleotide precursor UDP-N-acetylmuramoyl-L-alanyl-D-glutamate (UMAG) in the biosynthesis of bacterial cell-wall peptidoglycan. The sequence is that of UDP-N-acetylmuramoyl-L-alanyl-D-glutamate--2,6-diaminopimelate ligase from Salmonella typhimurium (strain LT2 / SGSC1412 / ATCC 700720).